The chain runs to 77 residues: Exodeoxyribonuclease 7 small subunit (77 aa).

This sequence belongs to the XseB family. Heterooligomer composed of large and small subunits.

The protein localises to the cytoplasm. The enzyme catalyses Exonucleolytic cleavage in either 5'- to 3'- or 3'- to 5'-direction to yield nucleoside 5'-phosphates.. Functionally, bidirectionally degrades single-stranded DNA into large acid-insoluble oligonucleotides, which are then degraded further into small acid-soluble oligonucleotides. The sequence is that of Exodeoxyribonuclease 7 small subunit from Lysinibacillus sphaericus (strain C3-41).